Reading from the N-terminus, the 145-residue chain is Deoxyuridine 5'-triphosphate nucleotidohydrolase (145 aa).

Residues 63-65 (RSG), asparagine 76, 80-82 (TID), and lysine 90 contribute to the substrate site.

Belongs to the dUTPase family. Requires Mg(2+) as cofactor.

The catalysed reaction is dUTP + H2O = dUMP + diphosphate + H(+). It functions in the pathway pyrimidine metabolism; dUMP biosynthesis; dUMP from dCTP (dUTP route): step 2/2. Functionally, this enzyme is involved in nucleotide metabolism: it produces dUMP, the immediate precursor of thymidine nucleotides and it decreases the intracellular concentration of dUTP so that uracil cannot be incorporated into DNA. The protein is Deoxyuridine 5'-triphosphate nucleotidohydrolase of Clostridium acetobutylicum (strain ATCC 824 / DSM 792 / JCM 1419 / IAM 19013 / LMG 5710 / NBRC 13948 / NRRL B-527 / VKM B-1787 / 2291 / W).